Here is a 295-residue protein sequence, read N- to C-terminus: UDP-N-acetylenolpyruvoylglucosamine reductase (295 aa).

Positions 23–188 (KVGGPADFLA…ISAKFALKPG (166 aa)) constitute an FAD-binding PCMH-type domain. The active site involves arginine 167. The active-site Proton donor is the serine 217. The active site involves glutamate 287.

Belongs to the MurB family. Requires FAD as cofactor.

It is found in the cytoplasm. The catalysed reaction is UDP-N-acetyl-alpha-D-muramate + NADP(+) = UDP-N-acetyl-3-O-(1-carboxyvinyl)-alpha-D-glucosamine + NADPH + H(+). The protein operates within cell wall biogenesis; peptidoglycan biosynthesis. Cell wall formation. The chain is UDP-N-acetylenolpyruvoylglucosamine reductase from Streptococcus pyogenes serotype M6 (strain ATCC BAA-946 / MGAS10394).